We begin with the raw amino-acid sequence, 78 residues long: UPF0401 protein YubL (78 aa).

Belongs to the UPF0401 family.

The protein is UPF0401 protein YubL (yubL) of Salmonella typhi.